The following is a 564-amino-acid chain: Threonine--tRNA ligase (564 aa).

Residues 167-464 (DHRAIGKRLE…LLEKTHGNLP (298 aa)) form a catalytic region. Zn(2+)-binding residues include Cys260, His311, and His441.

This sequence belongs to the class-II aminoacyl-tRNA synthetase family. As to quaternary structure, homodimer. It depends on Zn(2+) as a cofactor.

It localises to the cytoplasm. The catalysed reaction is tRNA(Thr) + L-threonine + ATP = L-threonyl-tRNA(Thr) + AMP + diphosphate + H(+). Its function is as follows. Catalyzes the attachment of threonine to tRNA(Thr) in a two-step reaction: L-threonine is first activated by ATP to form Thr-AMP and then transferred to the acceptor end of tRNA(Thr). Also edits incorrectly charged L-seryl-tRNA(Thr). This Mycoplasma pneumoniae (strain ATCC 29342 / M129 / Subtype 1) (Mycoplasmoides pneumoniae) protein is Threonine--tRNA ligase.